The sequence spans 390 residues: Putative 8-amino-7-oxononanoate synthase (390 aa).

Residue R20 coordinates substrate. 107 to 108 (GY) lines the pyridoxal 5'-phosphate pocket. A substrate-binding site is contributed by H132. Residues S181, 206-209 (DDAH), and 237-240 (TLGK) each bind pyridoxal 5'-phosphate. N6-(pyridoxal phosphate)lysine is present on K240. T356 contributes to the substrate binding site.

It belongs to the class-II pyridoxal-phosphate-dependent aminotransferase family. BioF subfamily. As to quaternary structure, homodimer. Pyridoxal 5'-phosphate serves as cofactor.

The catalysed reaction is 6-carboxyhexanoyl-[ACP] + L-alanine + H(+) = (8S)-8-amino-7-oxononanoate + holo-[ACP] + CO2. The protein operates within cofactor biosynthesis; biotin biosynthesis. Catalyzes the decarboxylative condensation of pimeloyl-[acyl-carrier protein] and L-alanine to produce 8-amino-7-oxononanoate (AON), [acyl-carrier protein], and carbon dioxide. In Syntrophotalea carbinolica (strain DSM 2380 / NBRC 103641 / GraBd1) (Pelobacter carbinolicus), this protein is Putative 8-amino-7-oxononanoate synthase (bioF).